We begin with the raw amino-acid sequence, 192 residues long: UPF0301 protein Bcep1808_0798 (192 aa).

This sequence belongs to the UPF0301 (AlgH) family.

In Burkholderia vietnamiensis (strain G4 / LMG 22486) (Burkholderia cepacia (strain R1808)), this protein is UPF0301 protein Bcep1808_0798.